A 431-amino-acid polypeptide reads, in one-letter code: Adenylosuccinate synthetase (431 aa).

Residues 13-19 and 41-43 each bind GTP; these read GDEGKGK and GHT. Residue D14 is the Proton acceptor of the active site. 2 residues coordinate Mg(2+): D14 and G41. Residues 14–17, 39–42, T130, R144, Q225, T240, and R304 contribute to the IMP site; these read DEGK and NAGH. Residue H42 is the Proton donor of the active site. 300–306 contributes to the substrate binding site; sequence ATTGRKR. GTP is bound by residues R306, 332–334, and 415–417; these read KLD and STG.

Belongs to the adenylosuccinate synthetase family. As to quaternary structure, homodimer. Mg(2+) is required as a cofactor.

The protein localises to the cytoplasm. The catalysed reaction is IMP + L-aspartate + GTP = N(6)-(1,2-dicarboxyethyl)-AMP + GDP + phosphate + 2 H(+). It participates in purine metabolism; AMP biosynthesis via de novo pathway; AMP from IMP: step 1/2. Its function is as follows. Plays an important role in the de novo pathway of purine nucleotide biosynthesis. Catalyzes the first committed step in the biosynthesis of AMP from IMP. The protein is Adenylosuccinate synthetase of Shewanella oneidensis (strain ATCC 700550 / JCM 31522 / CIP 106686 / LMG 19005 / NCIMB 14063 / MR-1).